A 174-amino-acid polypeptide reads, in one-letter code: CASP-like protein 1 (174 aa).

Residues 1–25 (MDSKSGRSESAINIPESNSTKHKST) are disordered. At 1–46 (MDSKSGRSESAINIPESNSTKHKSTAVHTATKVAAVAPRGGGWRRG) the chain is on the cytoplasmic side. Polar residues predominate over residues 8–18 (SESAINIPESN). A helical membrane pass occupies residues 47 to 67 (VSIFDFILRICALAAALAATA). Over 68 to 96 (TMGTTDQTLPFFTQIIQFQASYDDLPVFT) the chain is Extracellular. The helical transmembrane segment at 97–117 (FFVVANGIASGYLVLSLPFSI) threads the bilayer. Residues 118–119 (AT) lie on the Cytoplasmic side of the membrane. The chain crosses the membrane as a helical span at residues 120–139 (IVRPHAAAIKLLLIIFDTQF). Over 140–150 (NDFCQRVSGAV) the chain is Extracellular. A helical membrane pass occupies residues 151-171 (VASFVAAVILIFLVVLSAVAI). The Cytoplasmic portion of the chain corresponds to 172-174 (RKH).

This sequence belongs to the Casparian strip membrane proteins (CASP) family. Homodimer and heterodimers.

It is found in the cell membrane. The protein is CASP-like protein 1 of Triphysaria pusilla (Dwarf owl's-clover).